Here is a 103-residue protein sequence, read N- to C-terminus: Large ribosomal subunit protein uL24 (103 aa).

Belongs to the universal ribosomal protein uL24 family. Part of the 50S ribosomal subunit.

One of two assembly initiator proteins, it binds directly to the 5'-end of the 23S rRNA, where it nucleates assembly of the 50S subunit. In terms of biological role, one of the proteins that surrounds the polypeptide exit tunnel on the outside of the subunit. This Exiguobacterium sibiricum (strain DSM 17290 / CCUG 55495 / CIP 109462 / JCM 13490 / 255-15) protein is Large ribosomal subunit protein uL24.